Reading from the N-terminus, the 242-residue chain is Flavin prenyltransferase PAD1, mitochondrial (242 aa).

The transit peptide at 1 to 58 directs the protein to the mitochondrion; the sequence is MLLFPRRTNIAFFKTTGIFANFPLLGRTITTSPSFLTHKLSKEVTRASTSPPRPKRIV. Residues 63-65, serine 89, 140-143, and arginine 175 contribute to the FMN site; these read GAT and SMKS. Dimethylallyl phosphate-binding residues include tyrosine 205 and arginine 221.

It belongs to the UbiX/PAD1 family. In terms of assembly, oligomer.

The protein resides in the mitochondrion. It catalyses the reaction dimethylallyl phosphate + FMNH2 = prenylated FMNH2 + phosphate. In terms of biological role, flavin prenyltransferase that catalyzes the synthesis of the prenylated FMN cofactor (prenyl-FMN) for the ferulic acid decarboxylase FDC1/ubiD. The prenyltransferase is metal-independent and links a dimethylallyl moiety from dimethylallyl monophosphate (DMAP) to the flavin N5 and C6 atoms of FMN. Involved in the decarboxylation of phenylacrylic acids like ferulic acid, p-coumaric acid or cinnamic acid, producing the corresponding vinyl derivatives which play the role of aroma metabolites. Also involved in the degradation of the food preservative sorbic acid (2,4-hexadienoic acid) to a volatile hydrocarbon, 1,3-pentadiene. Not essential for ubiquinone synthesis. Can rescue Q biosynthesis in E.coli strains lacking UbiX. Has mRNA binding activity. In Saccharomyces cerevisiae (strain ATCC 204508 / S288c) (Baker's yeast), this protein is Flavin prenyltransferase PAD1, mitochondrial.